Reading from the N-terminus, the 404-residue chain is Propionate kinase PduW (404 aa).

Belongs to the acetokinase family. PduW subfamily.

The protein localises to the cytoplasm. It catalyses the reaction propanoate + ATP = propanoyl phosphate + ADP. Its pathway is polyol metabolism; 1,2-propanediol degradation. The protein operates within organic acid metabolism; propanoate degradation. Functionally, works with phosphate acetyltransferase (pta) to capture exogenous propionate and regenerate propionyl-CoA during degradation of propionate and 1,2-propanediol (1,2-PD). Ectopic expression partially complements a cobB deletion allowing some growth on propionate. Restores growth to an eutQ deletion on ethanolamine and tetrathionate under anoxic conditions. The chain is Propionate kinase PduW from Salmonella typhimurium (strain LT2 / SGSC1412 / ATCC 700720).